A 743-amino-acid polypeptide reads, in one-letter code: Phosphoribosylformylglycinamidine synthase subunit PurL (743 aa).

His-50 is a catalytic residue. ATP contacts are provided by Tyr-53 and Lys-92. A Mg(2+)-binding site is contributed by Glu-94. Substrate contacts are provided by residues 95-98 (SHNH) and Arg-117. His-96 serves as the catalytic Proton acceptor. Position 118 (Asp-118) interacts with Mg(2+). Position 241 (Gln-241) interacts with substrate. Position 269 (Asp-269) interacts with Mg(2+). 313–315 (ESQ) provides a ligand contact to substrate. Residues Asp-495 and Gly-532 each contribute to the ATP site. Position 533 (Asn-533) interacts with Mg(2+). Substrate is bound at residue Ser-535.

Belongs to the FGAMS family. In terms of assembly, monomer. Part of the FGAM synthase complex composed of 1 PurL, 1 PurQ and 2 PurS subunits.

It localises to the cytoplasm. It carries out the reaction N(2)-formyl-N(1)-(5-phospho-beta-D-ribosyl)glycinamide + L-glutamine + ATP + H2O = 2-formamido-N(1)-(5-O-phospho-beta-D-ribosyl)acetamidine + L-glutamate + ADP + phosphate + H(+). The protein operates within purine metabolism; IMP biosynthesis via de novo pathway; 5-amino-1-(5-phospho-D-ribosyl)imidazole from N(2)-formyl-N(1)-(5-phospho-D-ribosyl)glycinamide: step 1/2. Its function is as follows. Part of the phosphoribosylformylglycinamidine synthase complex involved in the purines biosynthetic pathway. Catalyzes the ATP-dependent conversion of formylglycinamide ribonucleotide (FGAR) and glutamine to yield formylglycinamidine ribonucleotide (FGAM) and glutamate. The FGAM synthase complex is composed of three subunits. PurQ produces an ammonia molecule by converting glutamine to glutamate. PurL transfers the ammonia molecule to FGAR to form FGAM in an ATP-dependent manner. PurS interacts with PurQ and PurL and is thought to assist in the transfer of the ammonia molecule from PurQ to PurL. This is Phosphoribosylformylglycinamidine synthase subunit PurL from Rhizobium leguminosarum bv. trifolii (strain WSM2304).